The sequence spans 828 residues: Conserved oligomeric Golgi complex subunit 3 (828 aa).

N-acetylalanine is present on Ala-2. Positions Asp-504 to Thr-543 are disordered. Polar residues predominate over residues Ser-525 to Thr-543. Ser-663 is modified (phosphoserine).

It belongs to the COG3 family. Component of the conserved oligomeric Golgi complex which is composed of eight different subunits and is required for normal Golgi morphology and localization. Interacts with TMEM115. In terms of tissue distribution, widely expressed with highest levels in pancreas and testis and lowest levels in lung.

Its subcellular location is the golgi apparatus. The protein resides in the golgi stack membrane. Functionally, involved in ER-Golgi transport. Also involved in retrograde (Golgi to ER) transport. The protein is Conserved oligomeric Golgi complex subunit 3 (COG3) of Homo sapiens (Human).